The following is a 534-amino-acid chain: Peptide chain release factor 3 (534 aa).

One can recognise a tr-type G domain in the interval 9–278; it reads ARRRTFAIIS…FFIEHAPPPQ (270 aa). Residues 18 to 25, 86 to 90, and 140 to 143 contribute to the GTP site; these read SHPDAGKT, DTPGH, and NKLD.

Belongs to the TRAFAC class translation factor GTPase superfamily. Classic translation factor GTPase family. PrfC subfamily.

It localises to the cytoplasm. Its function is as follows. Increases the formation of ribosomal termination complexes and stimulates activities of RF-1 and RF-2. It binds guanine nucleotides and has strong preference for UGA stop codons. It may interact directly with the ribosome. The stimulation of RF-1 and RF-2 is significantly reduced by GTP and GDP, but not by GMP. This chain is Peptide chain release factor 3, found in Xanthomonas oryzae pv. oryzae (strain MAFF 311018).